Consider the following 177-residue polypeptide: ATP synthase subunit delta (177 aa).

This sequence belongs to the ATPase delta chain family. F-type ATPases have 2 components, F(1) - the catalytic core - and F(0) - the membrane proton channel. F(1) has five subunits: alpha(3), beta(3), gamma(1), delta(1), epsilon(1). F(0) has three main subunits: a(1), b(2) and c(10-14). The alpha and beta chains form an alternating ring which encloses part of the gamma chain. F(1) is attached to F(0) by a central stalk formed by the gamma and epsilon chains, while a peripheral stalk is formed by the delta and b chains.

It is found in the cell inner membrane. Its function is as follows. F(1)F(0) ATP synthase produces ATP from ADP in the presence of a proton or sodium gradient. F-type ATPases consist of two structural domains, F(1) containing the extramembraneous catalytic core and F(0) containing the membrane proton channel, linked together by a central stalk and a peripheral stalk. During catalysis, ATP synthesis in the catalytic domain of F(1) is coupled via a rotary mechanism of the central stalk subunits to proton translocation. In terms of biological role, this protein is part of the stalk that links CF(0) to CF(1). It either transmits conformational changes from CF(0) to CF(1) or is implicated in proton conduction. This chain is ATP synthase subunit delta, found in Vibrio alginolyticus.